The primary structure comprises 2595 residues: Glucosylceramide transporter ABCA12 (2595 aa).

Residues 23 to 43 traverse the membrane as a helical segment; the sequence is PLWTLVLILWPVIIFIILAIT. Over residues 109 to 119 the composition is skewed to basic and acidic residues; the sequence is LKKPSNPKRDS. The disordered stretch occupies residues 109 to 143; sequence LKKPSNPKRDSNLSLRSTQVPERSHTSLATVPPRP. Asn120, Asn156, Asn174, Asn214, Asn275, Asn331, Asn365, Asn381, Asn410, Asn433, Asn455, Asn526, Asn541, Asn574, Asn605, Asn645, Asn749, Asn773, Asn812, Asn823, Asn854, Asn917, and Asn960 each carry an N-linked (GlcNAc...) asparagine glycan. A compositionally biased stretch (polar residues) spans 120–137; the sequence is NLSLRSTQVPERSHTSLA. Helical transmembrane passes span 1062–1082, 1109–1129, and 1142–1162; these read VSYS…AAFV, FAWL…LIVI, and FILF…SYLI. Asn1167 carries an N-linked (GlcNAc...) asparagine glycan. 3 consecutive transmembrane segments (helical) span residues 1171–1191, 1197–1217, and 1247–1267; these read IAAL…IVLV, LSYV…SYAS, and FGWL…IAWY. Asn1319 carries N-linked (GlcNAc...) asparagine glycosylation. Residues 1346 to 1577 form the ABC transporter 1 domain; that stretch reads VALHGVTKIY…FGDGYHLTLT (232 aa). 1378–1385 is a binding site for ATP; sequence GPNGAGKT. 6 N-linked (GlcNAc...) asparagine glycosylation sites follow: Asn1524, Asn1663, Asn1673, Asn1686, Asn1690, and Asn1704. The interval 1672 to 1703 is disordered; it reads SNMSLEHLTQRKVGNPSANGTSTPDDLSVSSS. Over residues 1687–1703 the composition is skewed to polar residues; that stretch reads PSANGTSTPDDLSVSSS. The helical transmembrane segment at 1747 to 1767 threads the bilayer; that stretch reads LIAQVILPIVFVATAMGLGTL. 5 N-linked (GlcNAc...) asparagine glycosylation sites follow: Asn1819, Asn1835, Asn1876, Asn1921, and Asn1952. The next 7 helical transmembrane spans lie at 1979 to 1999, 2035 to 2055, 2072 to 2092, 2103 to 2123, 2143 to 2163, 2187 to 2207, and 2270 to 2290; these read ATIS…GYSV, FIYD…VIAI, LLLL…AGLF, VCVN…VYFL, IFLI…SQQQ, GAMF…RLLI, and IIAV…GLLG. The 236-residue stretch at 2254-2489 folds into the ABC transporter 2 domain; the sequence is VQLHRLTKTY…FGRGFTVKVH (236 aa). 2290 to 2297 provides a ligand contact to ATP; that stretch reads GVNGAGKT. Residues Asn2318, Asn2542, and Asn2547 are each glycosylated (N-linked (GlcNAc...) asparagine). The span at 2575–2587 shows a compositional bias: polar residues; sequence VDTSSQGSTISVD. The interval 2575-2595 is disordered; that stretch reads VDTSSQGSTISVDSQEDQLDS.

It belongs to the ABC transporter superfamily. ABCA family. In terms of assembly, interacts with NR1H2 and ABCA1; this interaction is required for ABCA1 localization to the cell surface and is necessary for its normal activity and stability. In terms of tissue distribution, expressed in a number of other tissues besides skin, including heart, intestine, stomach, and kidney. Expressed mainly in the granular layer of the skin. Expressed in lung. Expressed in alpha and beta cells of pancreatic islets.

Its subcellular location is the cytoplasmic vesicle. The protein resides in the secretory vesicle membrane. It localises to the golgi apparatus membrane. The enzyme catalyses ATP + H2O + phospholipidSide 1 = ADP + phosphate + phospholipidSide 2.. It carries out the reaction a beta-D-glucosylceramide(in) + ATP + H2O = a beta-D-glucosylceramide(out) + ADP + phosphate + H(+). Its function is as follows. Transports lipids such as glucosylceramides from the outer to the inner leaflet of lamellar granules (LGs) membrane, whereby the lipids are finally transported to the keratinocyte periphery via the trans-Golgi network and LGs and released to the apical surface of the granular keratinocytes to form lipid lamellae in the stratum corneum of the epidermis, which is essential for skin barrier function. In the meantime, participates in the transport of the lamellar granules-associated proteolytic enzymes, in turn regulates desquamation and keratinocyte differentiation. Furthermore, is essential for the regulation of cellular cholesterol homeostasis by regulating ABCA1-dependent cholesterol efflux from macrophages through interaction with NR1H2 and ABCA1. Plays pleiotropic roles in regulating glucose stimulated insulin secretion from beta cells, regulating the morphology and fusion of insulin granules, lipid raft abundance and the actin cytoskeleton. Also involved in lung surfactant biogenesis. The chain is Glucosylceramide transporter ABCA12 from Mus musculus (Mouse).